The primary structure comprises 212 residues: uncharacterized protein (212 aa).

Transmembrane regions (helical) follow at residues 20-40, 70-90, 155-175, and 192-212; these read FLIG…LIIC, LMLL…YWLG, FVLI…YLGE, and QIVI…MEKI.

This sequence belongs to the DedA family.

It localises to the cell membrane. This is an uncharacterized protein from Haemophilus influenzae (strain ATCC 51907 / DSM 11121 / KW20 / Rd).